The chain runs to 263 residues: HTH-type transcriptional repressor NanR (263 aa).

Residues Met-1–Leu-22 form a disordered region. One can recognise an HTH gntR-type domain in the interval Lys-30–Pro-98. Positions Glu-58–Ala-77 form a DNA-binding region, H-T-H motif.

It belongs to the NanR family.

Its function is as follows. Transcriptional repressor that controls expression of the genes required for the catabolism of sialic acids. The sequence is that of HTH-type transcriptional repressor NanR from Shigella dysenteriae serotype 1 (strain Sd197).